The chain runs to 297 residues: Bifunctional protein FolD (297 aa).

Residues 164-166 (GRS), serine 193, and isoleucine 234 contribute to the NADP(+) site.

Belongs to the tetrahydrofolate dehydrogenase/cyclohydrolase family. In terms of assembly, homodimer.

The enzyme catalyses (6R)-5,10-methylene-5,6,7,8-tetrahydrofolate + NADP(+) = (6R)-5,10-methenyltetrahydrofolate + NADPH. It catalyses the reaction (6R)-5,10-methenyltetrahydrofolate + H2O = (6R)-10-formyltetrahydrofolate + H(+). It participates in one-carbon metabolism; tetrahydrofolate interconversion. In terms of biological role, catalyzes the oxidation of 5,10-methylenetetrahydrofolate to 5,10-methenyltetrahydrofolate and then the hydrolysis of 5,10-methenyltetrahydrofolate to 10-formyltetrahydrofolate. In Halobacterium salinarum (strain ATCC 700922 / JCM 11081 / NRC-1) (Halobacterium halobium), this protein is Bifunctional protein FolD.